The primary structure comprises 307 residues: GMP synthase [glutamine-hydrolyzing] subunit B (307 aa).

The region spanning 1 to 184 (MWENFIEEKV…LGLPEKIYNR (184 aa)) is the GMPS ATP-PPase domain. Position 27–33 (27–33 (SGGVDSS)) interacts with ATP.

As to quaternary structure, heterodimer composed of a glutamine amidotransferase subunit (A) and a GMP-binding subunit (B).

It catalyses the reaction XMP + L-glutamine + ATP + H2O = GMP + L-glutamate + AMP + diphosphate + 2 H(+). It functions in the pathway purine metabolism; GMP biosynthesis; GMP from XMP (L-Gln route): step 1/1. Catalyzes the synthesis of GMP from XMP. This is GMP synthase [glutamine-hydrolyzing] subunit B from Thermococcus kodakarensis (strain ATCC BAA-918 / JCM 12380 / KOD1) (Pyrococcus kodakaraensis (strain KOD1)).